We begin with the raw amino-acid sequence, 176 residues long: Ferritin, spleen middle subunit (176 aa).

The Ferritin-like diiron domain occupies 7–156; the sequence is QNYHRDCEAA…DFITNLSRMD (150 aa). Fe cation is bound by residues E24, E59, H62, E104, and Q138.

Belongs to the ferritin family. As to quaternary structure, in spleen, forms a homomer. The functional molecule forms a roughly spherical shell with a diameter of 12 nm and contains a central cavity into which the insoluble mineral iron core is deposited. In terms of tissue distribution, spleen (at protein level).

It carries out the reaction 4 Fe(2+) + O2 + 4 H(+) = 4 Fe(3+) + 2 H2O. In terms of biological role, stores iron in a soluble, non-toxic, readily available form. Important for iron homeostasis. Has ferroxidase activity. Iron is taken up in the ferrous form and deposited as ferric hydroxides after oxidation. The protein is Ferritin, spleen middle subunit of Trematomus bernacchii (Emerald rockcod).